We begin with the raw amino-acid sequence, 274 residues long: MQFSKMHGLGNDFVVVDAVTQNVYFPTEVIKRLADRNRGIGFDQLLVVEPPYDPDLDFHYRIFNADGSEVSQCGNGARCFARFVVLKGLTDKKEIAVSTAKGKMMLRVKDDDMVCVNMGEPIWEPNKIPFNANKFEKNYIIRTDIQTLLCGVVSMGNPHCVTQVEDIQHANIEILGPLLESHERFPERVNAGFMQIINRNHIKLRVYERGAGETQACGSGACAAVAVGIMQGVLDNNVQVDLPGGRLMIEWQGKGHPLYMTGEATHIYDGVIRL.

The substrate site is built by asparagine 11, glutamine 44, and asparagine 64. The Proton donor role is filled by cysteine 73. Substrate contacts are provided by residues 74-75 (GN), asparagine 157, asparagine 190, and 208-209 (ER). The active-site Proton acceptor is the cysteine 217. A substrate-binding site is contributed by 218–219 (GS).

This sequence belongs to the diaminopimelate epimerase family. Homodimer.

The protein localises to the cytoplasm. The catalysed reaction is (2S,6S)-2,6-diaminopimelate = meso-2,6-diaminopimelate. It functions in the pathway amino-acid biosynthesis; L-lysine biosynthesis via DAP pathway; DL-2,6-diaminopimelate from LL-2,6-diaminopimelate: step 1/1. In terms of biological role, catalyzes the stereoinversion of LL-2,6-diaminopimelate (L,L-DAP) to meso-diaminopimelate (meso-DAP), a precursor of L-lysine and an essential component of the bacterial peptidoglycan. This Histophilus somni (strain 129Pt) (Haemophilus somnus) protein is Diaminopimelate epimerase.